A 637-amino-acid chain; its full sequence is Acyl-CoA ligase cm3C (637 aa).

Residues 282–290 (TSGTSGRQK), 423–428 (HAWGLT), Asp507, Arg526, and Lys624 contribute to the ATP site. An SBD1 region spans residues 353-423 (DMQRMLGSVA…SLQPSWEFLH (71 aa)). Positions 424–486 (AWGLTETCIV…YKAPNMFVGY (63 aa)) are SBD2.

The protein belongs to the ATP-dependent AMP-binding enzyme family.

Its pathway is secondary metabolite biosynthesis. Acyl-CoA ligase; part of the gene cluster that mediates the biosynthesis of beauveriolides I and III, cyclodepsipeptides acting as inhibitors of the acyl-CoA:cholesterol acyltransferase. The HR-PKS cm3B initiates the biosynthesis of beauveriolides by iteratively catalyzing the formation of the linear polyketide chain. The ATP-dependent acetyl-CoA ligase cm3D converts the polyketide carboxylic acid to a CoA thioester which id shuttled to the first T domain in the NRPS cm3A by the acetyltransferase cm3C. Cm3A contains 13 domains and assembles the polyketide chain, L-phenylalanine, L-alanine, and D-leucine (or D-allo-isoleucine) to form beauveriolide I (or beauveriolide III). The production of both beauveriolides I and III suggests the substrate adaptability of cm3B, using different amino acids as substrates. This is Acyl-CoA ligase cm3C from Cordyceps militaris (strain CM01) (Caterpillar fungus).